Reading from the N-terminus, the 100-residue chain is Small ribosomal subunit protein uS14 (100 aa).

It belongs to the universal ribosomal protein uS14 family. As to quaternary structure, part of the 30S ribosomal subunit. Contacts proteins S3 and S10.

In terms of biological role, binds 16S rRNA, required for the assembly of 30S particles and may also be responsible for determining the conformation of the 16S rRNA at the A site. The chain is Small ribosomal subunit protein uS14 from Thermosynechococcus vestitus (strain NIES-2133 / IAM M-273 / BP-1).